Reading from the N-terminus, the 310-residue chain is Ornithine carbamoyltransferase (310 aa).

Residues 56–59 (STRT), Q83, R107, and 134–137 (HPCQ) contribute to the carbamoyl phosphate site. Residues N165, D229, and 233–234 (SM) each bind L-ornithine. Carbamoyl phosphate is bound by residues 269–270 (CL) and R297.

The protein belongs to the aspartate/ornithine carbamoyltransferase superfamily. OTCase family.

Its subcellular location is the cytoplasm. It catalyses the reaction carbamoyl phosphate + L-ornithine = L-citrulline + phosphate + H(+). It functions in the pathway amino-acid biosynthesis; L-arginine biosynthesis; L-arginine from L-ornithine and carbamoyl phosphate: step 1/3. Functionally, reversibly catalyzes the transfer of the carbamoyl group from carbamoyl phosphate (CP) to the N(epsilon) atom of ornithine (ORN) to produce L-citrulline. This is Ornithine carbamoyltransferase from Symbiobacterium thermophilum (strain DSM 24528 / JCM 14929 / IAM 14863 / T).